Reading from the N-terminus, the 309-residue chain is Porphobilinogen deaminase (309 aa).

An S-(dipyrrolylmethanemethyl)cysteine modification is found at C241.

The protein belongs to the HMBS family. Monomer. It depends on dipyrromethane as a cofactor.

The enzyme catalyses 4 porphobilinogen + H2O = hydroxymethylbilane + 4 NH4(+). The protein operates within porphyrin-containing compound metabolism; protoporphyrin-IX biosynthesis; coproporphyrinogen-III from 5-aminolevulinate: step 2/4. Tetrapolymerization of the monopyrrole PBG into the hydroxymethylbilane pre-uroporphyrinogen in several discrete steps. The chain is Porphobilinogen deaminase from Desulforudis audaxviator (strain MP104C).